The sequence spans 291 residues: MADDLGDEWWTQGDNSDVPEVEEETEHAEEKQPIKSTPKKRKVEKQIPDATKKKKATVKKECFITQERSEEKPDNESNKNKKRRKKKKTITDVLTSSKPVPGSPVDLVSLLKTYHSQTRSVIEQEELTLQDSCFLSCNDLTHSLSSYLKEVCPKWAKMQKQHTQTSSVVLLIVCGSALRTIDLIKQLVTFKGQAKVLKLFAKHIKVEEQIKSLSKGVTHIAVGTPGRICALLEKEGLTVQGLRYLVLDWNYRDQKQRRMVDVPEVKGDLLKMMDQGLIQSCREGTVKIGLF.

The disordered stretch occupies residues 1-96 (MADDLGDEWW…KKTITDVLTS (96 aa)). The segment covering 17-27 (DVPEVEEETEH) has biased composition (acidic residues). The span at 58–79 (VKKECFITQERSEEKPDNESNK) shows a compositional bias: basic and acidic residues.

This sequence belongs to the CMS1 family.

This chain is Protein CMSS1 (cmss1), found in Danio rerio (Zebrafish).